A 1157-amino-acid chain; its full sequence is Zinc finger protein 516 (1157 aa).

Residues 1–13 (MDRSREAEMELRR) show a composition bias toward basic and acidic residues. The interval 1–26 (MDRSREAEMELRRGPSPPRAGRSHEV) is disordered. The interval 1-420 (MDRSREAEME…ATRGKVAEPA (420 aa)) is mediates promoter DNA-binding and activation of transcription. C2H2-type zinc fingers lie at residues 34-56 (HSCC…MRKH), 62-84 (YKCP…IRSH), 162-185 (VPCS…HQAH), 188-211 (FKCR…ERDH), 236-258 (FPCE…MKKH), 264-286 (HGCH…MKAH), and 323-345 (EVCT…NAIH). The span at 449–458 (SQEKRKREQD) shows a compositional bias: basic and acidic residues. Disordered regions lie at residues 449–503 (SQEK…QGKS) and 523–653 (SRVH…KGPE). Residues 494-503 (ASATTGQGKS) show a composition bias toward polar residues. Residues 504 to 526 (SECFECGKIFRTYHQMVLHSRVH) form a C2H2-type 8 zinc finger. The segment covering 531–541 (RDRDPEGDRAA) has biased composition (basic and acidic residues). Residues 550–561 (EGDSASQPSSPG) are compositionally biased toward polar residues. Over residues 575 to 585 (EVVDDSGEEAV) the composition is skewed to acidic residues. A compositionally biased stretch (polar residues) spans 601–612 (GEVTPTALSNGD). Lys-630 is covalently cross-linked (Glycyl lysine isopeptide (Lys-Gly) (interchain with G-Cter in SUMO2)). The segment covering 644 to 653 (SSRETTKGPE) has biased composition (basic and acidic residues). Residue Lys-669 forms a Glycyl lysine isopeptide (Lys-Gly) (interchain with G-Cter in SUMO2) linkage. The C2H2-type 9; atypical zinc finger occupies 753 to 776 (HPCPYCTHKTYYPEVLWMHKRIWH). Disordered stretches follow at residues 831 to 996 (TQVP…EPSV) and 1013 to 1040 (RGEA…AEGQ). Over residues 914-928 (GSGSLSRSTTPTPSV) the composition is skewed to polar residues. Residues Lys-1032 and Lys-1051 each participate in a glycyl lysine isopeptide (Lys-Gly) (interchain with G-Cter in SUMO2) cross-link. Residues 1092 to 1114 (FVCVECGKSFHQPSQLRAHLRAH) form a C2H2-type 10 zinc finger. The segment at 1123-1157 (PRDSEVHTASTDAPKQGRDHTTPGTVPAGPLRKGI) is disordered.

It belongs to the krueppel C2H2-type zinc-finger protein family. Interacts with PRDM16; the interaction is direct and may play a role in the transcription of brown adipose tissue-specific genes. Interacts with PWWP2B. Interacts with HDAC1; this interaction is enhanced in the presence of PWWP2B. Expressed by adipocytes more specifically in brown adipose tissue compared to white adipose tissue (WAT).

The protein localises to the nucleus. In terms of biological role, transcriptional regulator that binds to the promoter and activates the transcription of genes promoting brown adipose tissue (BAT) differentiation. Among brown adipose tissue-specific genes, binds the proximal region of the promoter of the UCP1 gene to activate its transcription and thereby regulate thermogenesis. May also play a role in the cellular response to replication stress. The protein is Zinc finger protein 516 of Mus musculus (Mouse).